Reading from the N-terminus, the 507-residue chain is Glycogen synthase (507 aa).

Lys-15 provides a ligand contact to ADP-alpha-D-glucose.

It belongs to the glycosyltransferase 1 family. Bacterial/plant glycogen synthase subfamily.

It carries out the reaction [(1-&gt;4)-alpha-D-glucosyl](n) + ADP-alpha-D-glucose = [(1-&gt;4)-alpha-D-glucosyl](n+1) + ADP + H(+). It participates in glycan biosynthesis; glycogen biosynthesis. Functionally, synthesizes alpha-1,4-glucan chains using ADP-glucose. The polypeptide is Glycogen synthase (Rhodopirellula baltica (strain DSM 10527 / NCIMB 13988 / SH1)).